Consider the following 239-residue polypeptide: Pyridoxine 5'-phosphate synthase (239 aa).

Asn7 contributes to the 3-amino-2-oxopropyl phosphate binding site. Position 9-10 (9-10 (DH)) interacts with 1-deoxy-D-xylulose 5-phosphate. Arg18 serves as a coordination point for 3-amino-2-oxopropyl phosphate. The active-site Proton acceptor is the His43. 1-deoxy-D-xylulose 5-phosphate contacts are provided by Arg45 and His50. Glu70 serves as the catalytic Proton acceptor. A 1-deoxy-D-xylulose 5-phosphate-binding site is contributed by Thr100. His191 acts as the Proton donor in catalysis. Residues Gly192 and 213-214 (GH) contribute to the 3-amino-2-oxopropyl phosphate site.

Belongs to the PNP synthase family. As to quaternary structure, homooctamer; tetramer of dimers.

The protein resides in the cytoplasm. The enzyme catalyses 3-amino-2-oxopropyl phosphate + 1-deoxy-D-xylulose 5-phosphate = pyridoxine 5'-phosphate + phosphate + 2 H2O + H(+). It participates in cofactor biosynthesis; pyridoxine 5'-phosphate biosynthesis; pyridoxine 5'-phosphate from D-erythrose 4-phosphate: step 5/5. Functionally, catalyzes the complicated ring closure reaction between the two acyclic compounds 1-deoxy-D-xylulose-5-phosphate (DXP) and 3-amino-2-oxopropyl phosphate (1-amino-acetone-3-phosphate or AAP) to form pyridoxine 5'-phosphate (PNP) and inorganic phosphate. The sequence is that of Pyridoxine 5'-phosphate synthase from Gloeobacter violaceus (strain ATCC 29082 / PCC 7421).